Here is a 342-residue protein sequence, read N- to C-terminus: MCQVCGAAEADLHFGGISCRACAAFFRRFFLSKKQSKKCTCKTRILDSHPCRSCRILKCFEAGMTSKKIQSGRDKTSTKAISCISTESTSNSLSARIIPRSSLNIHGAVHLWQEFENTRACKKGTKRNALIVSTSSAGDMDSTWKMVINLFSSLGELEIKDKTALLRNFMPKFIQIDSVPYFAANIDVFKNIGRDEYESSIIDFYDGVLPETNTISKKDTIRIFEPYWNFYTNKVILPIALMKLEGPEFMALVWLLFFDNGYTNLSDKCREACRNIKKVILRELRSYQIDRNFDRNRFFEILEALQLVERGEKKFMEEMVICELLNIKIDPGFMEIIRESKL.

The nuclear receptor DNA-binding region spans 1-71 (MCQVCGAAEA…AGMTSKKIQS (71 aa)). An NR C4-type zinc finger spans residues 2-22 (CQVCGAAEADLHFGGISCRAC). The NR C4-type; degenerate zinc-finger motif lies at 39-54 (CTCKTRILDSHPCRSC). Residues 94–341 (SARIIPRSSL…GFMEIIRESK (248 aa)) form the NR LBD domain.

Belongs to the nuclear hormone receptor family.

Its subcellular location is the nucleus. In terms of biological role, orphan nuclear receptor. This is Nuclear hormone receptor family member nhr-150 (nhr-150) from Caenorhabditis elegans.